A 685-amino-acid polypeptide reads, in one-letter code: E3 ubiquitin-protein ligase RNF6 (685 aa).

3 stretches are compositionally biased toward basic and acidic residues: residues 1 to 10, 17 to 29, and 88 to 107; these read MNQSRSRSDG, PQDH…ERRW, and DLRD…SSHE. Disordered stretches follow at residues 1–29, 81–107, 121–142, 168–273, 286–345, and 499–576; these read MNQS…ERRW, EQLA…SSHE, GNAT…RTNP, DYTD…REGQ, RSNV…RRRG, and EADS…NPNN. 3 stretches are compositionally biased toward polar residues: residues 199 to 213, 250 to 264, and 286 to 297; these read SQTS…SNIP, ASRT…QSGG, and RSNVTVRNTNQR. Residues 303-313 show a composition bias toward low complexity; sequence LRSTSNSRSRS. Polar residues-rich tracts occupy residues 314-325 and 519-528; these read PIQRQSGTVYHN and ELSNLGTDNN. An RING-type zinc finger spans residues 632–673; the sequence is CSVCISDYVTGNKLRQLPCMHEFHIHCIDRWLSENCTCPICR.

It belongs to the RNF12 family. As to expression, weakly expressed in peripheral blood, spleen, prostate, testis and ovary. According to a report, it is preferentially expressed in testis and ovary and hardly detected in other tissues.

It is found in the nucleus. The protein localises to the cytoplasm. The protein resides in the cell projection. Its subcellular location is the axon. It localises to the PML body. It carries out the reaction S-ubiquitinyl-[E2 ubiquitin-conjugating enzyme]-L-cysteine + [acceptor protein]-L-lysine = [E2 ubiquitin-conjugating enzyme]-L-cysteine + N(6)-ubiquitinyl-[acceptor protein]-L-lysine.. The protein operates within protein modification; protein ubiquitination. Its function is as follows. E3 ubiquitin-protein ligase mediating 'Lys-48'-linked polyubiquitination of LIMK1 and its subsequent targeting to the proteasome for degradation. Negatively regulates axonal outgrowth through regulation of the LIMK1 turnover. Mediates 'Lys-6' and 'Lys-27'-linked polyubiquitination of AR/androgen receptor thereby modulating its transcriptional activity. May also bind DNA and function as a transcriptional regulator. Mediates polyubiquitination of QKI in macrophages, leading to its degradation. In Homo sapiens (Human), this protein is E3 ubiquitin-protein ligase RNF6.